A 409-amino-acid polypeptide reads, in one-letter code: MARAFLFVLDSFGIGHAPDAARFGDEGANTFGHIAGACAAGRADRAGLRTGPLDLPHMQSLGLNAAAAIAAGREPERGFASTGFFGAAEERSTGKDTPSGHWEIAGVPVPFEWGYFPETTPSFPAELTGRLIREASLPGILANCHASGTEVIARLGEEHIRTGKPICYTSADSVFQIAAHETHFGLDRLYAVCETARRLVDDYRIGRVIARPFVGESAETFERTANRRDYAVPPPEPTLLDRVEAAGRRVIGIGKIGDIFAHQGVTEVRKAAGNMALFDAALGAMDDAREGDLVFANFVDFDSLYGHRRDVAGYAAALEAFDRRLPEALGKLRAGDLLILTADHGCDPTWRGTDHTRECVPILGAGPGLAKGSIGRRRSYADIGETIASHLALPAGRHGVSFLNALQHA.

Mn(2+)-binding residues include aspartate 10, aspartate 302, histidine 307, aspartate 343, histidine 344, and histidine 355.

This sequence belongs to the phosphopentomutase family. Mn(2+) serves as cofactor.

It localises to the cytoplasm. The catalysed reaction is 2-deoxy-alpha-D-ribose 1-phosphate = 2-deoxy-D-ribose 5-phosphate. It catalyses the reaction alpha-D-ribose 1-phosphate = D-ribose 5-phosphate. The protein operates within carbohydrate degradation; 2-deoxy-D-ribose 1-phosphate degradation; D-glyceraldehyde 3-phosphate and acetaldehyde from 2-deoxy-alpha-D-ribose 1-phosphate: step 1/2. Isomerase that catalyzes the conversion of deoxy-ribose 1-phosphate (dRib-1-P) and ribose 1-phosphate (Rib-1-P) to deoxy-ribose 5-phosphate (dRib-5-P) and ribose 5-phosphate (Rib-5-P), respectively. The chain is Phosphopentomutase from Chelativorans sp. (strain BNC1).